A 231-amino-acid chain; its full sequence is Casparian strip membrane protein 1 (231 aa).

Topologically, residues 1–69 are cytoplasmic; it reads MSTSETATVI…FRQSDRGSRC (69 aa). Residues 70–90 form a helical membrane-spanning segment; that stretch reads LAFLDFLLRIAAFGPALAAAI. Residues 91-117 lie on the Extracellular side of the membrane; that stretch reads ATGTSDETLSVFTEFFQFRARFDDFPA. A helical membrane pass occupies residues 118 to 138; the sequence is FLFLMVANAIAAGYLVLSLPF. The Cytoplasmic portion of the chain corresponds to 139 to 152; that stretch reads SAVVVLRPQATGLR. The chain crosses the membrane as a helical span at residues 153-173; it reads LLLLVCDTIMIGLLTAAAAAA. At 174 to 207 the chain is on the extracellular side; the sequence is AAIVELAHNGNERANWVAICMQFHGFCQRTSGAV. A helical membrane pass occupies residues 208–228; the sequence is VASFLSVFLFLLLVVLAAFAI. The Cytoplasmic segment spans residues 229–231; it reads RKR.

This sequence belongs to the Casparian strip membrane proteins (CASP) family. Homodimer and heterodimers.

Its subcellular location is the cell membrane. Its function is as follows. Regulates membrane-cell wall junctions and localized cell wall deposition. Required for establishment of the Casparian strip membrane domain (CSD) and the subsequent formation of Casparian strips, a cell wall modification of the root endodermis that determines an apoplastic barrier between the intraorganismal apoplasm and the extraorganismal apoplasm and prevents lateral diffusion. This is Casparian strip membrane protein 1 from Brachypodium distachyon (Purple false brome).